Reading from the N-terminus, the 741-residue chain is 1,4-alpha-glucan branching enzyme GlgB 2 (741 aa).

Residues 1–38 form a disordered region; sequence MALRDTSIPEPSGPVPPAPGACATAPPLDPTDRGRLLA. Residue Asp421 is the Nucleophile of the active site. Glu474 (proton donor) is an active-site residue.

This sequence belongs to the glycosyl hydrolase 13 family. GlgB subfamily. In terms of assembly, monomer.

The catalysed reaction is Transfers a segment of a (1-&gt;4)-alpha-D-glucan chain to a primary hydroxy group in a similar glucan chain.. The protein operates within glycan biosynthesis; glycogen biosynthesis. Functionally, catalyzes the formation of the alpha-1,6-glucosidic linkages in glycogen by scission of a 1,4-alpha-linked oligosaccharide from growing alpha-1,4-glucan chains and the subsequent attachment of the oligosaccharide to the alpha-1,6 position. The sequence is that of 1,4-alpha-glucan branching enzyme GlgB 2 (glgB2) from Streptomyces coelicolor (strain ATCC BAA-471 / A3(2) / M145).